The sequence spans 442 residues: Coiled-coil domain-containing protein 112 (442 aa).

Coiled coils occupy residues 23 to 116 and 217 to 249; these read LEEL…RRIE and LEEK…VDTV. Disordered stretches follow at residues 245–272, 289–312, and 392–442; these read KVDT…KKQK, KLAS…QRQS, and EKVE…RQGI. Basic and acidic residues-rich tracts occupy residues 256–268 and 294–310; these read KAED…EEQR and LREE…ERQR. Residues 281-400 are a coiled coil; it reads RKSLEMSAKL…KEKVENNVSR (120 aa).

Its subcellular location is the cytoplasm. The protein resides in the cytoskeleton. It localises to the microtubule organizing center. It is found in the centrosome. The protein localises to the centriolar satellite. This chain is Coiled-coil domain-containing protein 112 (Ccdc112), found in Mus musculus (Mouse).